The sequence spans 417 residues: Gamma-glutamyl phosphate reductase (417 aa).

Belongs to the gamma-glutamyl phosphate reductase family.

The protein resides in the cytoplasm. The enzyme catalyses L-glutamate 5-semialdehyde + phosphate + NADP(+) = L-glutamyl 5-phosphate + NADPH + H(+). Its pathway is amino-acid biosynthesis; L-proline biosynthesis; L-glutamate 5-semialdehyde from L-glutamate: step 2/2. In terms of biological role, catalyzes the NADPH-dependent reduction of L-glutamate 5-phosphate into L-glutamate 5-semialdehyde and phosphate. The product spontaneously undergoes cyclization to form 1-pyrroline-5-carboxylate. This Legionella pneumophila (strain Corby) protein is Gamma-glutamyl phosphate reductase.